Consider the following 461-residue polypeptide: Asparagine--tRNA ligase (461 aa).

The protein belongs to the class-II aminoacyl-tRNA synthetase family. As to quaternary structure, homodimer.

The protein resides in the cytoplasm. It carries out the reaction tRNA(Asn) + L-asparagine + ATP = L-asparaginyl-tRNA(Asn) + AMP + diphosphate + H(+). The chain is Asparagine--tRNA ligase from Oleidesulfovibrio alaskensis (strain ATCC BAA-1058 / DSM 17464 / G20) (Desulfovibrio alaskensis).